The following is a 337-amino-acid chain: Heat-inducible transcription repressor HrcA (337 aa).

The protein belongs to the HrcA family.

Its function is as follows. Negative regulator of class I heat shock genes (grpE-dnaK-dnaJ and groELS operons). Prevents heat-shock induction of these operons. This is Heat-inducible transcription repressor HrcA from Kocuria rhizophila (strain ATCC 9341 / DSM 348 / NBRC 103217 / DC2201).